Reading from the N-terminus, the 274-residue chain is Protein LIKE COV 3 (274 aa).

The Cytoplasmic segment spans residues 1-60 (METRERDLERLIPMHKSGASPRDVVLSVPPSPLASPIHVAGKEAIYKVIRSWASKKFMTG). The chain crosses the membrane as a helical span at residues 61–81 (CVILLPIAVTFYFTWWFIHFV). Residues 82-93 (DGFFSPIYTHLG) are Extracellular-facing. Residues 94–114 (INMFGLGFVTSITFIFMVGVF) form a helical membrane-spanning segment. Residues 115–274 (MSSWLGASVL…VCLSLVLAWT (160 aa)) lie on the Cytoplasmic side of the membrane.

This sequence belongs to the plant COV1 protein family.

It is found in the membrane. The sequence is that of Protein LIKE COV 3 from Arabidopsis thaliana (Mouse-ear cress).